The primary structure comprises 222 residues: 26S proteasome non-ATPase regulatory subunit 9 (222 aa).

The PDZ domain maps to 108 to 194; that stretch reads QARDMAEARE…KPLNVMVIRR (87 aa). A Phosphoserine modification is found at serine 128.

Belongs to the proteasome subunit p27 family. Interacts with PSMC3. Part of a transient complex (modulator) containing PSMD9, PSMC6 and PSMC3 formed during the assembly of the 26S proteasome.

In terms of biological role, acts as a chaperone during the assembly of the 26S proteasome, specifically of the base subcomplex of the PA700/19S regulatory complex (RC). During the base subcomplex assembly is part of an intermediate PSMD9:PSMC6:PSMC3 module, also known as modulator trimer complex; PSMD9 is released during the further base assembly process. This Rattus norvegicus (Rat) protein is 26S proteasome non-ATPase regulatory subunit 9 (Psmd9).